The sequence spans 237 residues: Methylthioribulose-1-phosphate dehydratase (237 aa).

Cys-98 is a substrate binding site. The Zn(2+) site is built by His-116 and His-118. Glu-140 acts as the Proton donor/acceptor in catalysis. His-196 is a binding site for Zn(2+).

This sequence belongs to the aldolase class II family. MtnB subfamily. Zn(2+) is required as a cofactor.

Its subcellular location is the cytoplasm. It catalyses the reaction 5-(methylsulfanyl)-D-ribulose 1-phosphate = 5-methylsulfanyl-2,3-dioxopentyl phosphate + H2O. The protein operates within amino-acid biosynthesis; L-methionine biosynthesis via salvage pathway; L-methionine from S-methyl-5-thio-alpha-D-ribose 1-phosphate: step 2/6. Its function is as follows. Catalyzes the dehydration of methylthioribulose-1-phosphate (MTRu-1-P) into 2,3-diketo-5-methylthiopentyl-1-phosphate (DK-MTP-1-P). The protein is Methylthioribulose-1-phosphate dehydratase of Laccaria bicolor (strain S238N-H82 / ATCC MYA-4686) (Bicoloured deceiver).